The chain runs to 125 residues: Prefoldin subunit beta (125 aa).

It belongs to the prefoldin subunit beta family. Heterohexamer of two alpha and four beta subunits.

The protein localises to the cytoplasm. Functionally, molecular chaperone capable of stabilizing a range of proteins. Seems to fulfill an ATP-independent, HSP70-like function in archaeal de novo protein folding. The sequence is that of Prefoldin subunit beta from Pyrobaculum islandicum (strain DSM 4184 / JCM 9189 / GEO3).